The sequence spans 257 residues: UPF0246 protein RSKD131_2757 (257 aa).

It belongs to the UPF0246 family.

This is UPF0246 protein RSKD131_2757 from Cereibacter sphaeroides (strain KD131 / KCTC 12085) (Rhodobacter sphaeroides).